A 249-amino-acid chain; its full sequence is ATP synthase subunit a (249 aa).

Transmembrane regions (helical) follow at residues 30–50, 84–104, 114–134, 143–163, 196–216, and 221–241; these read SAYM…GVAG, FFPL…VGII, LIVT…YGFY, IFVP…IEVF, LLAG…GMVI, and LELL…CIYL.

It belongs to the ATPase A chain family. As to quaternary structure, F-type ATPases have 2 components, CF(1) - the catalytic core - and CF(0) - the membrane proton channel. CF(1) has five subunits: alpha(3), beta(3), gamma(1), delta(1), epsilon(1). CF(0) has four main subunits: a, b, b' and c.

It localises to the cell inner membrane. Key component of the proton channel; it plays a direct role in the translocation of protons across the membrane. This is ATP synthase subunit a from Rhodopseudomonas palustris (strain BisB18).